The chain runs to 1788 residues: Laminin subunit beta-1 (1788 aa).

Residues M1–S24 form the signal peptide. Positions D23 to F43 are disordered. Residues E50–S287 enclose the Laminin N-terminal domain. N138, N201, and N232 each carry an N-linked (GlcNAc...) asparagine glycan. Intrachain disulfides connect C288–C297, C290–C318, C320–C329, C332–C352, C355–C364, C357–C382, C385–C394, C397–C415, C418–C431, C420–C446, C448–C457, C460–C475, C478–C491, C480–C498, C500–C509, C512–C526, C529–C541, C531–C548, and C550–C559. Laminin EGF-like domains are found at residues C288–K354, C355–P417, C418–P477, and C478–L528. The N-linked (GlcNAc...) asparagine glycan is linked to N487. Residues C529–C559 form the Laminin EGF-like 5; truncated domain. A Laminin IV type B domain is found at F567 to H783. N591 carries N-linked (GlcNAc...) asparagine glycosylation. The Cell attachment site motif lies at R641 to D643. Cystine bridges form between C789–C801, C791–C808, C810–C819, C822–C834, C837–C849, C839–C856, C858–C867, C870–C880, C883–C892, C885–C899, C902–C911, C914–C930, C933–C949, C935–C960, C962–C971, C974–C988, C991–C1005, C993–C1012, C1015–C1024, C1027–C1040, C1043–C1057, C1045–C1064, C1066–C1075, C1078–C1091, C1094–C1106, C1096–C1113, C1115–C1124, C1127–C1139, C1142–C1154, C1144–C1161, C1163–C1172, and C1175–C1186. 8 consecutive Laminin EGF-like domains span residues C789–A836, C837–V882, C883–P932, C933–K990, C991–Q1042, C1043–S1093, C1094–P1141, and C1142–P1188. N-linked (GlcNAc...) asparagine glycosylation is present at N1051. The tract at residues C1189 to V1405 is domain II. N-linked (GlcNAc...) asparagine glycans are attached at residues N1246, N1301, N1330, and N1341. Residues E1255–V1405 are a coiled coil. Residues C1406–E1432 are domain alpha. A domain I region spans residues H1433–T1788. Residues I1453–L1505 adopt a coiled-coil conformation. N-linked (GlcNAc...) asparagine glycans are attached at residues N1473, N1493, and N1515. Residues E1540 to A1561 adopt a coiled-coil conformation. N-linked (GlcNAc...) asparagine glycans are attached at residues N1581, N1644, and N1703. A coiled-coil region spans residues Q1608–I1762. The segment at G1690–R1719 is disordered. Positions N1693 to D1708 are enriched in polar residues. A compositionally biased stretch (basic and acidic residues) spans R1709–R1719.

Laminin is a complex glycoprotein, consisting of three different polypeptide chains (alpha, beta, gamma), which are bound to each other by disulfide bonds into a cross-shaped molecule comprising one long and three short arms with globules at each end. As to expression, found in the basement membranes (major component).

It localises to the secreted. It is found in the extracellular space. The protein resides in the extracellular matrix. Its subcellular location is the basement membrane. In terms of biological role, binding to cells via a high affinity receptor, laminin is thought to mediate the attachment, migration and organization of cells into tissues during embryonic development by interacting with other extracellular matrix components. Required for Ndg localization to the basement membrane. The polypeptide is Laminin subunit beta-1 (LanB1) (Drosophila melanogaster (Fruit fly)).